The sequence spans 529 residues: MGSSRAPWMGRVGGHGMMALLLAGLLLPGTLAKSIGTFSDPCKDPMRITSPNDPCLTGKGDSSGFSSYSGSSSSGSSISSARSSGGGSSGSSSGSSIAQGGSAGSFKPGTGYSQVSYSSGSGSSLQGASGSSQLGSSSSHSGSSGSHSGSSSSHSSSSSSFQFSSSSFQVGNGSALPTNDNSYRGILNPSQPGQSSSSSQTFGVSSSGQSVSSNQRPCSSDIPDSPCSGGPIVSHSGPYIPSSHSVSGGQRPVVVVVDQHGSGAPGVVQGPPCSNGGLPGKPCPPITSVDKSYGGYEVVGGSSDSYLVPGMTYSKGKIYPVGYFTKENPVKGSPGVPSFAAGPPISEGKYFSSNPIIPSQSAASSAIAFQPVGTGGVQLCGGGSTGSKGPCSPSSSRVPSSSSISSSSGLPYHPCGSASQSPCSPPGTGSFSSSSSSQSSGKIILQPCGSKSSSSGHPCMSVSSLTLTGGPDGSPHPDPSAGAKPCGSSSAGKIPCRSIRDILAQVKPLGPQLADPEVFLPQGELLDSP.

The signal sequence occupies residues 1-32; the sequence is MGSSRAPWMGRVGGHGMMALLLAGLLLPGTLA. Disordered stretches follow at residues 38 to 248 and 383 to 492; these read FSDP…SVSG and GSTG…SSAG. 6 stretches are compositionally biased toward low complexity: residues 58 to 83, 90 to 100, 111 to 175, 189 to 231, 392 to 408, and 426 to 441; these read GKGD…SARS, GSSSGSSIAQG, GYSQ…NGSA, PSQP…SGGP, SPSS…SSSS, and PGTG…QSSG. N-linked (GlcNAc...) asparagine glycosylation is present at Asn172. The segment covering 449–467 has biased composition (polar residues); that stretch reads GSKSSSSGHPCMSVSSLTL.

The protein resides in the secreted. In terms of biological role, important for the epidermal barrier integrity. This Pan troglodytes (Chimpanzee) protein is Corneodesmosin (CDSN).